A 499-amino-acid polypeptide reads, in one-letter code: Probable cytosol aminopeptidase (499 aa).

Positions 269 and 274 each coordinate Mn(2+). Lys281 is an active-site residue. 3 residues coordinate Mn(2+): Asp292, Asp351, and Glu353. Arg355 is a catalytic residue.

This sequence belongs to the peptidase M17 family. Mn(2+) is required as a cofactor.

The protein resides in the cytoplasm. It catalyses the reaction Release of an N-terminal amino acid, Xaa-|-Yaa-, in which Xaa is preferably Leu, but may be other amino acids including Pro although not Arg or Lys, and Yaa may be Pro. Amino acid amides and methyl esters are also readily hydrolyzed, but rates on arylamides are exceedingly low.. The catalysed reaction is Release of an N-terminal amino acid, preferentially leucine, but not glutamic or aspartic acids.. Presumably involved in the processing and regular turnover of intracellular proteins. Catalyzes the removal of unsubstituted N-terminal amino acids from various peptides. In Actinobacillus pleuropneumoniae serotype 5b (strain L20), this protein is Probable cytosol aminopeptidase.